A 251-amino-acid polypeptide reads, in one-letter code: Aspartate/glutamate leucyltransferase (251 aa).

This sequence belongs to the R-transferase family. Bpt subfamily.

It localises to the cytoplasm. The catalysed reaction is N-terminal L-glutamyl-[protein] + L-leucyl-tRNA(Leu) = N-terminal L-leucyl-L-glutamyl-[protein] + tRNA(Leu) + H(+). The enzyme catalyses N-terminal L-aspartyl-[protein] + L-leucyl-tRNA(Leu) = N-terminal L-leucyl-L-aspartyl-[protein] + tRNA(Leu) + H(+). Its function is as follows. Functions in the N-end rule pathway of protein degradation where it conjugates Leu from its aminoacyl-tRNA to the N-termini of proteins containing an N-terminal aspartate or glutamate. The chain is Aspartate/glutamate leucyltransferase from Xanthomonas axonopodis pv. citri (strain 306).